The following is a 121-amino-acid chain: Ribonuclease P protein component (121 aa).

It belongs to the RnpA family. In terms of assembly, consists of a catalytic RNA component (M1 or rnpB) and a protein subunit.

It catalyses the reaction Endonucleolytic cleavage of RNA, removing 5'-extranucleotides from tRNA precursor.. RNaseP catalyzes the removal of the 5'-leader sequence from pre-tRNA to produce the mature 5'-terminus. It can also cleave other RNA substrates such as 4.5S RNA. The protein component plays an auxiliary but essential role in vivo by binding to the 5'-leader sequence and broadening the substrate specificity of the ribozyme. The chain is Ribonuclease P protein component from Neisseria meningitidis serogroup B (strain ATCC BAA-335 / MC58).